The following is a 686-amino-acid chain: Translation initiation factor IF-2 (686 aa).

Positions 61–98 (FEVEEKVVRSKKNSNKKKKKGKGNEDKRQENFAGRQQT) are disordered. Basic residues predominate over residues 69 to 81 (RSKKNSNKKKKKG). Positions 188-357 (ERPAVVTIMG…LLVSEVEEYK (170 aa)) constitute a tr-type G domain. The G1 stretch occupies residues 197-204 (GHVDHGKT). 197–204 (GHVDHGKT) is a GTP binding site. Residues 222-226 (GITQH) are G2. The tract at residues 243–246 (DTPG) is G3. Residues 243–247 (DTPGH) and 297–300 (NKMD) each bind GTP. Positions 297-300 (NKMD) are G4. A G5 region spans residues 333–335 (SAI).

The protein belongs to the TRAFAC class translation factor GTPase superfamily. Classic translation factor GTPase family. IF-2 subfamily.

The protein localises to the cytoplasm. Functionally, one of the essential components for the initiation of protein synthesis. Protects formylmethionyl-tRNA from spontaneous hydrolysis and promotes its binding to the 30S ribosomal subunits. Also involved in the hydrolysis of GTP during the formation of the 70S ribosomal complex. This chain is Translation initiation factor IF-2, found in Bacillus cereus (strain B4264).